A 336-amino-acid chain; its full sequence is MSMNNITSKMNQDSYGYFQLHMSDFTRVSLSIVFTLVFLVGIIGNAVIIWFIGFKWTKTISTLLFINLALADSLFLIFIPVYTVYVLSNFHWYLGEFLCRVSSFFFTTNMYASMFLLTFISIDKYLTLTSHRLVYKYRKYRNYYVCIGAIWCISIALGVPTLYYKRVILSSSRNETRCISYYGDDKHTAITIYRIIVCIRFIIGYVFPMTVILLSYALIVYKVKFINKPPNRSFMITTASIFVFLACWTPHHVLNIISLYGLKSTSMYNYIKESIPFVNAIAFVYSAINPIIYIFVIRLTSTYDSDTMDELRSALLDEETTSTEDCSDIEISDISR.

At 1–31 (MSMNNITSKMNQDSYGYFQLHMSDFTRVSLS) the chain is on the extracellular side. A glycan (N-linked (GlcNAc...) asparagine; by host) is linked at Asn5. The helical transmembrane segment at 32–52 (IVFTLVFLVGIIGNAVIIWFI) threads the bilayer. Over 53–63 (GFKWTKTISTL) the chain is Cytoplasmic. The chain crosses the membrane as a helical span at residues 64-84 (LFINLALADSLFLIFIPVYTV). The Extracellular portion of the chain corresponds to 85–101 (YVLSNFHWYLGEFLCRV). A disulfide bridge connects residues Cys99 and Cys178. A helical membrane pass occupies residues 102–122 (SSFFFTTNMYASMFLLTFISI). Over 123 to 143 (DKYLTLTSHRLVYKYRKYRNY) the chain is Cytoplasmic. Residues 144-164 (YVCIGAIWCISIALGVPTLYY) form a helical membrane-spanning segment. The Extracellular segment spans residues 165–200 (KRVILSSSRNETRCISYYGDDKHTAITIYRIIVCIR). Asn174 carries an N-linked (GlcNAc...) asparagine; by host glycan. A helical membrane pass occupies residues 201–221 (FIIGYVFPMTVILLSYALIVY). Residues 222–240 (KVKFINKPPNRSFMITTAS) are Cytoplasmic-facing. The chain crosses the membrane as a helical span at residues 241-261 (IFVFLACWTPHHVLNIISLYG). Over 262–276 (LKSTSMYNYIKESIP) the chain is Extracellular. The helical transmembrane segment at 277–297 (FVNAIAFVYSAINPIIYIFVI) threads the bilayer. At 298–336 (RLTSTYDSDTMDELRSALLDEETTSTEDCSDIEISDISR) the chain is on the cytoplasmic side.

Belongs to the G-protein coupled receptor 1 family.

The protein localises to the host cell membrane. This is G-protein coupled receptor homolog FPV027 from Vertebrata (FPV).